A 432-amino-acid polypeptide reads, in one-letter code: DnaJ-like protein 1 (432 aa).

The 70-residue stretch at 4-73 folds into the J domain; it reads DTEYYDLLGV…RAKYDKYGRK (70 aa). Residues 117–187 are disordered; that stretch reads NAEDEAEKEK…KKNEQVGAEA (71 aa).

The protein belongs to the DnaJ family. Interacts with SLN1.

The protein resides in the cytoplasm. Required for peroxisomal protein import which maintains the function of peroxisomes. In Saccharomyces cerevisiae (strain ATCC 204508 / S288c) (Baker's yeast), this protein is DnaJ-like protein 1 (DJP1).